Consider the following 391-residue polypeptide: 1-acyl-sn-glycerol-3-phosphate acyltransferase 2 (391 aa).

The helical transmembrane segment at 3–23 (MAAAAVIVPLGILFFISGLVV) threads the bilayer. The HXXXXD motif signature appears at 92 to 97 (HRSDID). 2 helical membrane-spanning segments follow: residues 306–326 (LAVVVSWACLLTLGAMKFLHW) and 334–354 (KGIALSALGLGIITLCMQILI). Positions 358–391 (QSERSTPAKVAPAKPKDKHQSGSSSQTEVEEKQK) are disordered.

It belongs to the 1-acyl-sn-glycerol-3-phosphate acyltransferase family.

The protein localises to the endoplasmic reticulum membrane. It carries out the reaction a 1-acyl-sn-glycero-3-phosphate + an acyl-CoA = a 1,2-diacyl-sn-glycero-3-phosphate + CoA. It functions in the pathway phospholipid metabolism; CDP-diacylglycerol biosynthesis; CDP-diacylglycerol from sn-glycerol 3-phosphate: step 2/3. Its function is as follows. Converts lysophosphatidic acid (LPA) into phosphatidic acid by incorporating acyl moiety at the 2 position. In Brassica oleracea (Wild cabbage), this protein is 1-acyl-sn-glycerol-3-phosphate acyltransferase 2 (LPAT2).